The chain runs to 146 residues: VHLTGDEKSAVAALWSKVNVDEVGGEALGRLLVVYPWTQRFFESFGALSSADAVMGNPKVKAHGKKVLGAFSDGLAHLDNLKGTFAQLSELHCDKLHVDPENFRLLGNVLVCVLARNFGKEFTPQVQAAFQKVVAGVATALAHKYH.

The Globin domain maps to 2-146 (HLTGDEKSAV…VATALAHKYH (145 aa)). Position 50 is a phosphoserine (Ser-50). Residues His-63 and His-92 each contribute to the heme b site.

This sequence belongs to the globin family. Heterotetramer of two delta chains and two alpha chains. Red blood cells.

This Saimiri sciureus (Common squirrel monkey) protein is Hemoglobin subunit delta (HBD).